Here is a 396-residue protein sequence, read N- to C-terminus: Deoxyguanosinetriphosphate triphosphohydrolase-like protein (396 aa).

One can recognise an HD domain in the interval 62–198 (RLTHSLEVAQ…AALADDIAYN (137 aa)).

Belongs to the dGTPase family. Type 2 subfamily.

This chain is Deoxyguanosinetriphosphate triphosphohydrolase-like protein, found in Jannaschia sp. (strain CCS1).